Consider the following 443-residue polypeptide: Sulfoquinovose isomerase (443 aa).

The protein belongs to the SqvD family.

It catalyses the reaction 6-sulfo-beta-D-quinovose = 6-deoxy-6-sulfo-D-fructose. Part of the sulfo-EMP2 pathway, a D-sulfoquinovose degradation pathway that produces sulfolactate (SL). Catalyzes the isomerization of sulfoquinovose (SQ) to 6-deoxy-6-sulfo-D-fructose (SF). This is Sulfoquinovose isomerase from Alkalicoccus urumqiensis (Bacillus urumqiensis).